The chain runs to 173 residues: Large ribosomal subunit protein uL10 (173 aa).

The protein belongs to the universal ribosomal protein uL10 family. Part of the ribosomal stalk of the 50S ribosomal subunit. The N-terminus interacts with L11 and the large rRNA to form the base of the stalk. The C-terminus forms an elongated spine to which L12 dimers bind in a sequential fashion forming a multimeric L10(L12)X complex.

Its function is as follows. Forms part of the ribosomal stalk, playing a central role in the interaction of the ribosome with GTP-bound translation factors. The protein is Large ribosomal subunit protein uL10 of Chlorobaculum tepidum (strain ATCC 49652 / DSM 12025 / NBRC 103806 / TLS) (Chlorobium tepidum).